Here is a 764-residue protein sequence, read N- to C-terminus: 1,4-alpha-glucan branching enzyme GlgB (764 aa).

The active-site Nucleophile is Asp-434. The active-site Proton donor is Glu-487.

This sequence belongs to the glycosyl hydrolase 13 family. GlgB subfamily. As to quaternary structure, monomer.

It carries out the reaction Transfers a segment of a (1-&gt;4)-alpha-D-glucan chain to a primary hydroxy group in a similar glucan chain.. It participates in glycan biosynthesis; glycogen biosynthesis. Catalyzes the formation of the alpha-1,6-glucosidic linkages in glycogen by scission of a 1,4-alpha-linked oligosaccharide from growing alpha-1,4-glucan chains and the subsequent attachment of the oligosaccharide to the alpha-1,6 position. In Nostoc sp. (strain PCC 7120 / SAG 25.82 / UTEX 2576), this protein is 1,4-alpha-glucan branching enzyme GlgB.